The chain runs to 196 residues: Putative HTH-type transcriptional regulator in exeN 3'region (196 aa).

In terms of domain architecture, HTH luxR-type spans 120 to 185 (ASVGGDRLTR…ELFNLFLNHL (66 aa)). Residues 144–163 (TEAIAAALGIGNGTVKNHRK) constitute a DNA-binding region (H-T-H motif).

The polypeptide is Putative HTH-type transcriptional regulator in exeN 3'region (Aeromonas salmonicida).